The following is a 489-amino-acid chain: Probable anthranilate synthase component 1 (489 aa).

L-tryptophan is bound by residues serine 54 and 262-264; that span reads PYM. 297–298 contacts chorismate; it reads GT. Mg(2+) is bound at residue glutamate 324. Phosphoserine is present on residues serine 390 and serine 392. Chorismate is bound by residues tyrosine 412, arginine 433, 447–449, and glycine 449; that span reads GGG. A Mg(2+)-binding site is contributed by glutamate 462. Residue serine 488 is modified to Phosphoserine.

Belongs to the anthranilate synthase component I family. Tetramer of two components I and two components II. Mg(2+) is required as a cofactor.

The enzyme catalyses chorismate + L-glutamine = anthranilate + pyruvate + L-glutamate + H(+). It participates in amino-acid biosynthesis; L-tryptophan biosynthesis; L-tryptophan from chorismate: step 1/5. In Schizosaccharomyces pombe (strain 972 / ATCC 24843) (Fission yeast), this protein is Probable anthranilate synthase component 1 (trp3).